A 131-amino-acid polypeptide reads, in one-letter code: Ribonuclease P protein component (131 aa).

This sequence belongs to the RnpA family. As to quaternary structure, consists of a catalytic RNA component (M1 or rnpB) and a protein subunit.

The enzyme catalyses Endonucleolytic cleavage of RNA, removing 5'-extranucleotides from tRNA precursor.. RNaseP catalyzes the removal of the 5'-leader sequence from pre-tRNA to produce the mature 5'-terminus. It can also cleave other RNA substrates such as 4.5S RNA. The protein component plays an auxiliary but essential role in vivo by binding to the 5'-leader sequence and broadening the substrate specificity of the ribozyme. This chain is Ribonuclease P protein component, found in Synechococcus sp. (strain WH7803).